The following is a 238-amino-acid chain: uncharacterized protein (238 aa).

This is an uncharacterized protein from Methanocaldococcus jannaschii (strain ATCC 43067 / DSM 2661 / JAL-1 / JCM 10045 / NBRC 100440) (Methanococcus jannaschii).